The sequence spans 116 residues: Nascent polypeptide-associated complex protein (116 aa).

The region spanning 6–70 (PKQMKDLERM…AREESKQQQK (65 aa)) is the NAC-A/B domain.

It belongs to the NAC-alpha family. In terms of assembly, homodimer. Interacts with the ribosome. Binds ribosomal RNA.

Functionally, contacts the emerging nascent chain on the ribosome. This chain is Nascent polypeptide-associated complex protein, found in Sulfolobus acidocaldarius (strain ATCC 33909 / DSM 639 / JCM 8929 / NBRC 15157 / NCIMB 11770).